Here is a 468-residue protein sequence, read N- to C-terminus: ATP synthase subunit beta (468 aa).

Position 148-155 (148-155 (GGAGVGKT)) interacts with ATP.

The protein belongs to the ATPase alpha/beta chains family. F-type ATPases have 2 components, CF(1) - the catalytic core - and CF(0) - the membrane proton channel. CF(1) has five subunits: alpha(3), beta(3), gamma(1), delta(1), epsilon(1). CF(0) has three main subunits: a(1), b(2) and c(9-12). The alpha and beta chains form an alternating ring which encloses part of the gamma chain. CF(1) is attached to CF(0) by a central stalk formed by the gamma and epsilon chains, while a peripheral stalk is formed by the delta and b chains.

Its subcellular location is the cell inner membrane. The enzyme catalyses ATP + H2O + 4 H(+)(in) = ADP + phosphate + 5 H(+)(out). In terms of biological role, produces ATP from ADP in the presence of a proton gradient across the membrane. The catalytic sites are hosted primarily by the beta subunits. This chain is ATP synthase subunit beta, found in Xanthomonas campestris pv. campestris (strain 8004).